Reading from the N-terminus, the 309-residue chain is MRKIIVGSRKSKLALTQTNWFIDQLKALGLPYEFEVKEIVTKGDVILDVTLSKVGGKGLFVKEIEHALLTKEIDMAVHSMKDMPAVLPEGLMIGCTPKRVDPRDAFISKNGASFKELAEGAILGTSSLRRSAQLLAARPDLQVKWIRGNIDTRLRKLKEEDYDAIILATAGLQRMGWDDEVITEHLDETLCVPAVGQGALAIECREDDKDLLQLLAHMNDAITERTVAAERVFLHKLEGGCQVPIAGYATLKENDTIELTALVGSMDGSVLLKETVVGTNPEEVGLEAAGRLIKQGAKELILAANKEQQ.

The residue at position 241 (C241) is an S-(dipyrrolylmethanemethyl)cysteine.

The protein belongs to the HMBS family. As to quaternary structure, monomer. It depends on dipyrromethane as a cofactor.

It carries out the reaction 4 porphobilinogen + H2O = hydroxymethylbilane + 4 NH4(+). It participates in porphyrin-containing compound metabolism; protoporphyrin-IX biosynthesis; coproporphyrinogen-III from 5-aminolevulinate: step 2/4. Tetrapolymerization of the monopyrrole PBG into the hydroxymethylbilane pre-uroporphyrinogen in several discrete steps. The polypeptide is Porphobilinogen deaminase (Bacillus cereus (strain G9842)).